Consider the following 198-residue polypeptide: UPF0312 protein PFL_5802 (198 aa).

The N-terminal stretch at 1-23 (MLKKTLAALAIGSAVLAAGQVMA) is a signal peptide.

The protein belongs to the UPF0312 family. Type 1 subfamily.

It localises to the periplasm. This Pseudomonas fluorescens (strain ATCC BAA-477 / NRRL B-23932 / Pf-5) protein is UPF0312 protein PFL_5802.